A 67-amino-acid polypeptide reads, in one-letter code: MLYPSIDNLLLKIDSKYSLVTVAAKRARYMQLENDKGVLPSYQSDKFVGKALEEIHAGKLVLQNDDK.

It belongs to the RNA polymerase subunit omega family. As to quaternary structure, the RNAP catalytic core consists of 2 alpha, 1 beta, 1 beta' and 1 omega subunit. When a sigma factor is associated with the core the holoenzyme is formed, which can initiate transcription.

It catalyses the reaction RNA(n) + a ribonucleoside 5'-triphosphate = RNA(n+1) + diphosphate. Its function is as follows. Promotes RNA polymerase assembly. Latches the N- and C-terminal regions of the beta' subunit thereby facilitating its interaction with the beta and alpha subunits. In Listeria monocytogenes serotype 4b (strain F2365), this protein is DNA-directed RNA polymerase subunit omega.